Reading from the N-terminus, the 601-residue chain is Glutamyl-tRNA(Gln) amidotransferase subunit B, mitochondrial (601 aa).

A mitochondrion-targeting transit peptide spans 1–52 (MLQQWLRQSPGAARFLRGSCCRGPQSGSLRHSPLPTAPHRCIRSLQTSATES).

This sequence belongs to the GatB/GatE family. GatB subfamily. In terms of assembly, subunit of the heterotrimeric GatCAB amidotransferase (AdT) complex, composed of A, B and C subunits.

The protein resides in the mitochondrion. The enzyme catalyses L-glutamyl-tRNA(Gln) + L-glutamine + ATP + H2O = L-glutaminyl-tRNA(Gln) + L-glutamate + ADP + phosphate + H(+). Functionally, allows the formation of correctly charged Gln-tRNA(Gln) through the transamidation of misacylated Glu-tRNA(Gln) in the mitochondria. The reaction takes place in the presence of glutamine and ATP through an activated gamma-phospho-Glu-tRNA(Gln). The sequence is that of Glutamyl-tRNA(Gln) amidotransferase subunit B, mitochondrial from Neosartorya fischeri (strain ATCC 1020 / DSM 3700 / CBS 544.65 / FGSC A1164 / JCM 1740 / NRRL 181 / WB 181) (Aspergillus fischerianus).